The primary structure comprises 113 residues: Putative pterin-4-alpha-carbinolamine dehydratase (113 aa).

The protein belongs to the pterin-4-alpha-carbinolamine dehydratase family.

It carries out the reaction (4aS,6R)-4a-hydroxy-L-erythro-5,6,7,8-tetrahydrobiopterin = (6R)-L-erythro-6,7-dihydrobiopterin + H2O. The chain is Putative pterin-4-alpha-carbinolamine dehydratase from Idiomarina loihiensis (strain ATCC BAA-735 / DSM 15497 / L2-TR).